Consider the following 80-residue polypeptide: Adipogenin (80 aa).

The helical transmembrane segment at 14 to 34 threads the bilayer; sequence FSFLVFWFCLPVGLLLLLIIW.

This sequence belongs to the adipogenin family.

The protein localises to the membrane. It localises to the nucleus. Functionally, plays a role in stimulating adipocyte differentiation and development. In Homo sapiens (Human), this protein is Adipogenin.